Here is a 497-residue protein sequence, read N- to C-terminus: Xylooligosaccharide oxidase (497 aa).

Positions 1–16 (MHLLPLTVSATAVVSA) are cleaved as a signal peptide. Cys30 and Cys79 form a disulfide bridge. N-linked (GlcNAc...) asparagine glycans are attached at residues Asn42 and Asn117. The FAD-binding PCMH-type domain occupies 57–230 (LPYTPAAIAK…ASFRFKTFAA (174 aa)). A cross-link (6-(S-cysteinyl)-8alpha-(pros-histidyl)-FAD (His-Cys)) is located at residues 94 to 155 (HSYASFGLGG…GKRAFSHGTC (62 aa)). Thr154 provides a ligand contact to substrate. Asn192, Asn233, and Asn245 each carry an N-linked (GlcNAc...) asparagine glycan. Arg272 is a binding site for substrate. 2 N-linked (GlcNAc...) asparagine glycosylation sites follow: Asn289 and Asn307. Glu412 and Tyr451 together coordinate substrate.

Belongs to the oxygen-dependent FAD-linked oxidoreductase family. Requires FAD as cofactor. The FAD cofactor is bound via a bicovalent 6-S-cysteinyl, 8alpha-N1-histidyl FAD linkage.

It localises to the secreted. The catalysed reaction is D-xylobiose + O2 = D-xylobiono-1,5-lactone + H2O2. The enzyme catalyses D-xylotriose + O2 = D-xylotriono-1,5-lactone + H2O2. It catalyses the reaction D-xylotetraose + O2 = D-xylotetraono-1,5-lactone + H2O2. Catalyzes the selective oxidation of C1 hydroxyl moieties on mono-, oligo- and polysaccharides with concomitant reduction of molecular oxygen to hydrogen peroxide. This results in the formation of the corresponding lactones, which typically undergo spontaneous hydrolysis. Xylooligosaccharide oxidase is able to oxidize a variety of substrates including D-xylose, D-cellobiose, lactose and arabinose. The enzyme acts primarily on xylooligosaccharides, indicating that it prefers pentose-based oligosaccharides over hexose-based oligosaccharides. The chain is Xylooligosaccharide oxidase from Thermothelomyces thermophilus (strain ATCC 42464 / BCRC 31852 / DSM 1799) (Sporotrichum thermophile).